The following is a 441-amino-acid chain: Nucleolar and spindle-associated protein 1 (441 aa).

Disordered regions lie at residues 47-186 and 216-267; these read ARKG…PNFK and MNEL…LGLK. 2 stretches are compositionally biased toward polar residues: residues 56-74 and 100-116; these read ESQT…ISNQ and DSQQ…PTEF. The segment covering 117-126 has biased composition (basic and acidic residues); the sequence is QNHEKQESQD. Ser-124 is subject to Phosphoserine; by ATM. Residue Ser-135 is modified to Phosphoserine. Over residues 152-171 the composition is skewed to basic and acidic residues; that stretch reads RDSKVPSEGKKSLYTDESSK. Thr-182 is modified (phosphothreonine). An interaction with microtubules region spans residues 237–382; it reads GRLSVASTPI…HKGKLKPWGQ (146 aa). The residue at position 240 (Ser-240) is a Phosphoserine. A compositionally biased stretch (polar residues) spans 241–264; that stretch reads VASTPISQRRSQGRSCGPASQSTL. At Thr-244 the chain carries Phosphothreonine. Phosphoserine occurs at positions 247, 255, 269, 276, and 311. The disordered stretch occupies residues 286 to 319; sequence AATKDNEHKRSLTKTPARKSAHVTVSGGTPKGEA. Residues Thr-314, Thr-338, and Thr-349 each carry the phosphothreonine modification. 2 positions are modified to phosphoserine: Ser-352 and Ser-363. The short motif at 384-390 is the KEN box element; it reads KENNYLN. The interval 401-427 is disordered; it reads KTYKQPHLQTKEEQRKKREQERKEKKA. Residues 407-432 are a coiled coil; that stretch reads HLQTKEEQRKKREQERKEKKAKVLGM. Basic and acidic residues predominate over residues 409-424; sequence QTKEEQRKKREQERKE. At Lys-411 the chain carries N6-acetyllysine.

The protein belongs to the NUSAP family. As to quaternary structure, interacts with DNA and microtubules. Microtubule bundling is inhibited by IPO7, KPNA2 and KPNB1 while association with DNA is also inhibited by IPO7 and KPNA2. Post-translationally, ubiquitinated. Ubiquitination by FZR1 may lead to proteasome-dependent degradation of this protein. Phosphorylation by ATM in G2/M-phase induces mitotic arrest.

The protein resides in the cytoplasm. Its subcellular location is the nucleus. It localises to the nucleolus. The protein localises to the cytoskeleton. It is found in the spindle. The protein resides in the chromosome. In terms of biological role, microtubule-associated protein with the capacity to bundle and stabilize microtubules. May associate with chromosomes and promote the organization of mitotic spindle microtubules around them. This chain is Nucleolar and spindle-associated protein 1 (NUSAP1), found in Homo sapiens (Human).